The primary structure comprises 255 residues: MEMVDSCHFSPSEFFYDSSCIPSPEEGYTEDYEHGMSIYGAHKKDLEESDEDEHVRAPIGHHQAGNCLMWACKACKRKSSTTDRRKAATMRERRRLKKVNQAFETLKRCTTTNPNQRLPKVEILRNAIQYIESLQDLLREQVENYYSLPGQSCTEPGSPMSSCSDGMSDCSSPQWSGRNSSFDNVYCSDLQTSFSSTKLTLSSLDCLSSIVDRISSPQQCSLPIPDSITPSPTSSTDSLPRSPDAHDCRPIYHVL.

Residues 83–134 form the bHLH domain; the sequence is DRRKAATMRERRRLKKVNQAFETLKRCTTTNPNQRLPKVEILRNAIQYIESL. The span at 221-242 shows a compositional bias: low complexity; the sequence is SLPIPDSITPSPTSSTDSLPRS. The interval 221-246 is disordered; that stretch reads SLPIPDSITPSPTSSTDSLPRSPDAH.

As to quaternary structure, efficient DNA binding requires dimerization with another bHLH protein.

The protein resides in the nucleus. Its function is as follows. Acts as a transcriptional activator that promotes transcription of muscle-specific target genes and plays a role in muscle differentiation. Induces fibroblasts to differentiate into myoblasts. Probable sequence specific DNA-binding protein. The chain is Myogenic factor 5 (myf5) from Xenopus laevis (African clawed frog).